The primary structure comprises 230 residues: Complex I assembly factor TMEM126B, mitochondrial (230 aa).

At S34 the chain carries Phosphoserine. Transmembrane regions (helical) follow at residues 72–92 (IYQM…SNFL), 110–130 (LATL…IDAL), 141–161 (VFRS…SLAF), and 199–219 (IPLV…YAVF).

It belongs to the TMEM126 family. In terms of assembly, part of the mitochondrial complex I assembly/MCIA complex that comprises at least the core subunits TMEM126B, NDUFAF1, ECSIT and ACAD9 and complement subunits such as COA1 and TMEM186. Associates with the intermediate 370 kDa subcomplex of incompletely assembled complex I. Interacts with TMEM70.

It is found in the mitochondrion membrane. As part of the MCIA complex, involved in the assembly of the mitochondrial complex I. Participates in constructing the membrane arm of complex I. This chain is Complex I assembly factor TMEM126B, mitochondrial, found in Homo sapiens (Human).